We begin with the raw amino-acid sequence, 168 residues long: S-ribosylhomocysteine lyase (168 aa).

Residues H54, H58, and C128 each coordinate Fe cation.

This sequence belongs to the LuxS family. In terms of assembly, homodimer. Fe cation serves as cofactor.

It carries out the reaction S-(5-deoxy-D-ribos-5-yl)-L-homocysteine = (S)-4,5-dihydroxypentane-2,3-dione + L-homocysteine. Involved in the synthesis of autoinducer 2 (AI-2) which is secreted by bacteria and is used to communicate both the cell density and the metabolic potential of the environment. The regulation of gene expression in response to changes in cell density is called quorum sensing. Catalyzes the transformation of S-ribosylhomocysteine (RHC) to homocysteine (HC) and 4,5-dihydroxy-2,3-pentadione (DPD). The sequence is that of S-ribosylhomocysteine lyase from Actinobacillus succinogenes (strain ATCC 55618 / DSM 22257 / CCUG 43843 / 130Z).